Consider the following 429-residue polypeptide: Argininosuccinate lyase (429 aa).

It belongs to the lyase 1 family. Argininosuccinate lyase subfamily.

The protein localises to the cytoplasm. The enzyme catalyses 2-(N(omega)-L-arginino)succinate = fumarate + L-arginine. Its pathway is amino-acid biosynthesis; L-arginine biosynthesis; L-arginine from L-ornithine and carbamoyl phosphate: step 3/3. The protein is Argininosuccinate lyase of Pyrobaculum neutrophilum (strain DSM 2338 / JCM 9278 / NBRC 100436 / V24Sta) (Thermoproteus neutrophilus).